The chain runs to 457 residues: MQKYWREARSLLALAIPVIIAQIAQTAMGFVDTIMAGSVSATDMAAVAVGTSIWLPTILFGHGLLLALTPVIAQLNGAGKRPSIPHQISQGFWLVAGLSVLIIAVLYNAGHIISMMDNIDPLLADKAIGYLHAIMWGAPGYLCFQVLRGLCEGLSKTTPGMVIGFIGLLINIPVNYIFIYGKFGAPALGGVGCGVATASVYWIMYLLMHSYVARAPSLKDVRRPCTFEAADWATLRRLIAIGMPIALALFFEVTLFAVVALLVSPLGIVAVAGHQVALNFSSLMFVLPMSLGVAATIRVGYRLGQGSTDSARVSARTAIAVGMAMATCTAIFTIVLRKPIALLYNDDVQVLTMATHLMLLAALYQISDSVQVIGSGVLRGYKDTRSIFFITFIAYWLLGLPTGYLLALTNQITPAMGPSGFWIGFIIGLTSAAIMMALRIRWLQRQPKSWILQRAAR.

12 helical membrane passes run 11–31 (LLALAIPVIIAQIAQTAMGFV), 53–73 (IWLPTILFGHGLLLALTPVIA), 93–113 (WLVAGLSVLIIAVLYNAGHII), 127–147 (AIGYLHAIMWGAPGYLCFQVL), 160–180 (GMVIGFIGLLINIPVNYIFIY), 188–208 (LGGVGCGVATASVYWIMYLLM), 239–259 (IAIGMPIALALFFEVTLFAVV), 277–297 (ALNFSSLMFVLPMSLGVAATI), 316–336 (RTAIAVGMAMATCTAIFTIVL), 357–377 (LMLLAALYQISDSVQVIGSGV), 387–407 (IFFITFIAYWLLGLPTGYLLA), and 418–438 (PSGFWIGFIIGLTSAAIMMAL).

Belongs to the multi antimicrobial extrusion (MATE) (TC 2.A.66.1) family. MdtK subfamily.

It is found in the cell inner membrane. Functionally, multidrug efflux pump that functions probably as a Na(+)/drug antiporter. In Edwardsiella ictaluri (strain 93-146), this protein is Multidrug resistance protein MdtK.